Consider the following 588-residue polypeptide: Cyclomaltodextrinase (588 aa).

Substrate-binding residues include His247 and Arg326. The Nucleophile role is filled by Asp328. The active-site Proton donor is Glu357. Residues His423–Asp424, Asp468, and Arg472 contribute to the substrate site.

The protein belongs to the glycosyl hydrolase 13 family. As to quaternary structure, exists as a monomer or a homodimer in solution. Homodimer is more active and stable than the monomer.

It catalyses the reaction cyclomaltodextrin + H2O = linear maltodextrin. Its activity is regulated as follows. No metal dependence, but Mn(2+) increases the activity with alpha-cyclodextrin as substrate. No effect on the activity with presence or absence of Ca(2+), Zn(2+), Tween-20 or EDTA. Its function is as follows. Hydrolyzes alpha-, beta- and gamma-cyclodextrins with the highest activity with alpha-cyclodextrin (cyclomaltohexaose). Pullulan is the preferred substrate from linear substrates. Maltose is a major product of these reactions. Is also able to hydrolyze maltotriose and acarbose, and transglycosylate their hydrolytic products. Major reaction products of maltotriose and of acarbose are maltose and glucose, and glucose and pseudotrisaccharide, respectively. No activity with glucose or maltose as substrate. This is Cyclomaltodextrinase from Geobacillus thermopakistaniensis (strain MAS1).